We begin with the raw amino-acid sequence, 80 residues long: Small ribosomal subunit protein uS17 (80 aa).

This sequence belongs to the universal ribosomal protein uS17 family. In terms of assembly, part of the 30S ribosomal subunit.

Functionally, one of the primary rRNA binding proteins, it binds specifically to the 5'-end of 16S ribosomal RNA. The chain is Small ribosomal subunit protein uS17 from Chelativorans sp. (strain BNC1).